A 131-amino-acid chain; its full sequence is MRHGNGLRKLNRTSSHRLAMFRNMAVSLITHEAIKTTLPKAKELRRVVEPLITLGKEPTLANKRLAFARLRDRAAVVKLFAEIGPRYAARNGGYTRVLKMGFRQGDNAPMAYMELVDRPEVEETEADNAAE.

It belongs to the bacterial ribosomal protein bL17 family. As to quaternary structure, part of the 50S ribosomal subunit. Contacts protein L32.

The chain is Large ribosomal subunit protein bL17 from Bordetella petrii (strain ATCC BAA-461 / DSM 12804 / CCUG 43448).